Here is a 418-residue protein sequence, read N- to C-terminus: Tyrosine--tRNA ligase (418 aa).

Position 34 (Y34) interacts with L-tyrosine. Positions 39 to 48 match the 'HIGH' region motif; the sequence is PTADSLHLGH. The L-tyrosine site is built by Y169 and Q173. The 'KMSKS' region signature appears at 229–233; the sequence is KFGKS. An ATP-binding site is contributed by K232. The 67-residue stretch at 352–418 folds into the S4 RNA-binding domain; the sequence is NNIVELLVSS…GKKKYFVLTY (67 aa).

It belongs to the class-I aminoacyl-tRNA synthetase family. TyrS type 1 subfamily. Homodimer.

Its subcellular location is the cytoplasm. The enzyme catalyses tRNA(Tyr) + L-tyrosine + ATP = L-tyrosyl-tRNA(Tyr) + AMP + diphosphate + H(+). Functionally, catalyzes the attachment of tyrosine to tRNA(Tyr) in a two-step reaction: tyrosine is first activated by ATP to form Tyr-AMP and then transferred to the acceptor end of tRNA(Tyr). The chain is Tyrosine--tRNA ligase from Streptococcus pneumoniae (strain Taiwan19F-14).